The sequence spans 389 residues: MSWWWARSLGAQKEFKENGALTSYQSVGLIIGVTGIVGNSLAEILPLPDTPGGPWKVYGVARRPRPAWNTDHPIEYIQCDVASTEDTLAKLSPLTNITHIFYVAWTGSEDCEVNETMFHNVLKAVIPNAPNLRHICIQTGIKHYTGPLDPDGGIQPHDSPFTEDLPRLNAPNFYHNLEDILIEEAAKKKGLTWSVHRPALVFGFSPYSMMNIIGALSVYAVICKHENKPLIYHGAPDNSRDSWNVYADAADADLIAEHQIWAAVDSNAKNEVFNCSNGDVFKWKQMWKILAEQFEVELVGYEDGQKRMSLQERMKGKGPVWDEIVRKHKLLPTKLEDVAQWWFADIVSQSQNLVNGVNKSKENGFLGFRDSKKSFVYWIKKMRAAKIIP.

Residues 34-36, 62-63, 80-81, 104-105, and Q138 each bind NADP(+); these read TGI, RR, DV, and AW. Active-site residues include K142 and Y174. Residues K142 and Y174 each coordinate substrate. NADP(+) is bound by residues Y174, V201, and 208 to 210; that span reads SMM. S350 serves as a coordination point for substrate.

Belongs to the short-chain dehydrogenases/reductases (SDR) family. Highly divergent.

It carries out the reaction (S)-8-oxocitronellyl enol + NADP(+) = (6E)-8-oxogeranial + NADPH + H(+). The catalysed reaction is (S)-8-oxocitronellyl enol + NAD(+) = (6E)-8-oxogeranial + NADH + H(+). In terms of biological role, iridoid synthase that catalyzes the first step in generation of the iridoid ring scaffold using the linear monoterpene (6E)-8-oxogeranial as substrate. Iridoids comprise a large family of distinctive bicyclic monoterpenes that possess a wide range of pharmacological activities, including anticancer, anti-inflammatory, antifungal and antibacterial activities. This is (S)-8-oxocitronellyl enol synthase CYC1 from Camptotheca acuminata (Happy tree).